The primary structure comprises 99 residues: Aspartyl/glutamyl-tRNA(Asn/Gln) amidotransferase subunit C (99 aa).

The protein belongs to the GatC family. As to quaternary structure, heterotrimer of A, B and C subunits.

It carries out the reaction L-glutamyl-tRNA(Gln) + L-glutamine + ATP + H2O = L-glutaminyl-tRNA(Gln) + L-glutamate + ADP + phosphate + H(+). The enzyme catalyses L-aspartyl-tRNA(Asn) + L-glutamine + ATP + H2O = L-asparaginyl-tRNA(Asn) + L-glutamate + ADP + phosphate + 2 H(+). Functionally, allows the formation of correctly charged Asn-tRNA(Asn) or Gln-tRNA(Gln) through the transamidation of misacylated Asp-tRNA(Asn) or Glu-tRNA(Gln) in organisms which lack either or both of asparaginyl-tRNA or glutaminyl-tRNA synthetases. The reaction takes place in the presence of glutamine and ATP through an activated phospho-Asp-tRNA(Asn) or phospho-Glu-tRNA(Gln). The sequence is that of Aspartyl/glutamyl-tRNA(Asn/Gln) amidotransferase subunit C from Thermobifida fusca (strain YX).